The primary structure comprises 238 residues: MATLGVNIDHIANVRQARRTVEPDPVQFAFLAELGGADSITVHLREDRRHIQDRDIFLLKETIKTKLNLEMAATEEMLKISKKLLPDFVTLVPEKREEVTTEGGLNVKNNQRYLKDYVTSLKSSNIEVSAFIDPLSEQINSSAEIGFDFIELHTGKYSELKGQERYVELQKIIESTHYAFDLGLVVNAGHGLNYQNAEKIASINNINELNIGHSIVARALAVGLERAVSEMKALISTN.

Asn7 contacts 3-amino-2-oxopropyl phosphate. 1-deoxy-D-xylulose 5-phosphate is bound at residue 9–10 (DH). Arg18 lines the 3-amino-2-oxopropyl phosphate pocket. The active-site Proton acceptor is His43. 1-deoxy-D-xylulose 5-phosphate contacts are provided by Arg45 and His50. The active-site Proton acceptor is Glu70. Thr100 lines the 1-deoxy-D-xylulose 5-phosphate pocket. The active-site Proton donor is His190. 3-amino-2-oxopropyl phosphate contacts are provided by residues Gly191 and 212 to 213 (GH).

It belongs to the PNP synthase family. In terms of assembly, homooctamer; tetramer of dimers.

Its subcellular location is the cytoplasm. It catalyses the reaction 3-amino-2-oxopropyl phosphate + 1-deoxy-D-xylulose 5-phosphate = pyridoxine 5'-phosphate + phosphate + 2 H2O + H(+). Its pathway is cofactor biosynthesis; pyridoxine 5'-phosphate biosynthesis; pyridoxine 5'-phosphate from D-erythrose 4-phosphate: step 5/5. Catalyzes the complicated ring closure reaction between the two acyclic compounds 1-deoxy-D-xylulose-5-phosphate (DXP) and 3-amino-2-oxopropyl phosphate (1-amino-acetone-3-phosphate or AAP) to form pyridoxine 5'-phosphate (PNP) and inorganic phosphate. This Prochlorococcus marinus (strain MIT 9515) protein is Pyridoxine 5'-phosphate synthase.